A 128-amino-acid chain; its full sequence is Small ribosomal subunit protein uS8c (128 aa).

It belongs to the universal ribosomal protein uS8 family. Part of the 30S ribosomal subunit.

It is found in the plastid. The protein resides in the chloroplast. Functionally, one of the primary rRNA binding proteins, it binds directly to 16S rRNA central domain where it helps coordinate assembly of the platform of the 30S subunit. This Welwitschia mirabilis (Tree tumbo) protein is Small ribosomal subunit protein uS8c (rps8).